Here is a 346-residue protein sequence, read N- to C-terminus: 26S proteasome non-ATPase regulatory subunit 4 (346 aa).

The VWFA domain maps to 5–190; it reads STMICVDNSE…LTDALLQSSV (186 aa). UIM domains are found at residues 216–235 and 273–292; these read ENDP…ERAR and TEEQ…NAPA. Residues 290–346 are disordered; it reads APAEQPQVQHEQMDVDGAPAVGGDNLDDLMNNPELLQQIVDDLPAANAEKDDDKEKK. Basic and acidic residues predominate over residues 337-346; that stretch reads AEKDDDKEKK.

This sequence belongs to the proteasome subunit S5A family. As to quaternary structure, the 26S proteasome is composed of a core protease, known as the 20S proteasome, capped at one or both ends by the 19S regulatory complex (RC). The RC is composed of at least 18 different subunits in two subcomplexes, the base and the lid, which form the portions proximal and distal to the 20S proteolytic core, respectively. In terms of tissue distribution, broadly expressed with high expression in the pharynx, intestine, hypodermis and spermatheca and weak expression in the excretory cell, body wall muscle, vulva and somatic gonad.

It is found in the cytoplasm. It localises to the nucleus. Its function is as follows. Binds and presumably selects ubiquitin-conjugates for destruction. Required for protein degradation and ubiquitin-proteasome system (UBS) function and regulates proteasomal subunit expression. Involvement in UBS might be cell type specific. Regulator of the autophagy-lysosome pathway that may confer resistance to autophagy by regulating the expression of autophagy-related proteins such as lgg-1, and by regulating lysosome formation, possibly by modulating elt-2 activity. Required for fertility, sperm production, and sex determination through regulation of tra-2 protein. Plays a role in the elimination of paternal mitochondria in fertilized eggs. The chain is 26S proteasome non-ATPase regulatory subunit 4 from Caenorhabditis elegans.